The following is an 836-amino-acid chain: Protein translocase subunit SecA (836 aa).

ATP-binding positions include Gln85, 103–107, and Asp492; that span reads GEGKT. The interval 786–817 is disordered; it reads REQVAKETSTNQGGDDTLKKQPIKKEPKIGRN. Basic and acidic residues predominate over residues 801 to 816; the sequence is DTLKKQPIKKEPKIGR. Zn(2+)-binding residues include Cys820, Cys822, Cys831, and Cys832.

Belongs to the SecA family. As to quaternary structure, monomer and homodimer. Part of the essential Sec protein translocation apparatus which comprises SecA, SecYEG and auxiliary proteins SecDF. Other proteins may also be involved. Zn(2+) is required as a cofactor.

It localises to the cell membrane. It is found in the cytoplasm. It carries out the reaction ATP + H2O + cellular proteinSide 1 = ADP + phosphate + cellular proteinSide 2.. Part of the Sec protein translocase complex. Interacts with the SecYEG preprotein conducting channel. Has a central role in coupling the hydrolysis of ATP to the transfer of proteins into and across the cell membrane, serving as an ATP-driven molecular motor driving the stepwise translocation of polypeptide chains across the membrane. The sequence is that of Protein translocase subunit SecA from Clostridium tetani (strain Massachusetts / E88).